The following is a 377-amino-acid chain: Transcription factor EC (377 aa).

The region spanning 169–222 (QKKDNHNLIERRRRYNINYRIKELGTLIPKSNDPDMRWNKGTILKASVEYIKWL) is the bHLH domain. Residues 349 to 377 (DPLLSSTSPAASKESSRRSSFSTDDGDDL) are disordered. Positions 353 to 370 (SSTSPAASKESSRRSSFS) are enriched in low complexity.

Belongs to the MiT/TFE family.

It localises to the nucleus. Its function is as follows. Transcriptional regulator that acts as a repressor or an activator. Binds DNA. The chain is Transcription factor EC (TFEC) from Gallus gallus (Chicken).